Here is a 260-residue protein sequence, read N- to C-terminus: MDKRWSLQGLTALVTGGASGIGHAIVEELAGFGAKIHVCDISKTLLNQSLSEWEKKGFQVSGSVCDASNRLERETLMQTVTTIFDGKLNILVNNVGTIRTKPTIEYEAEDFSFLISTNLESAYHLSQLSHPLLKASGNGIITFISSAAGIVSFDAASIYGLTKGALNQLARNLACEWAKDGIRANAVAPNFITTALAKPFLEDAGFNEILSSRTPLGRAGEPREVASLVAFLCLPAASYITGQTICVDGGLTVNGFSYQP.

Residue 13-37 (LVTGGASGIGHAIVEELAGFGAKIH) coordinates NADP(+). Ser146 contributes to the substrate binding site. Tyr159 acts as the Proton acceptor in catalysis.

It belongs to the short-chain dehydrogenases/reductases (SDR) family. SDR65C subfamily.

In terms of biological role, reductase active only on small flexible lipophilic carbonyls. No activity with cyclic monoterpenes, tropinone, nitrogen-containing tropinone analogs, tropine or pseudotropine as substrate. The polypeptide is Tropinone reductase homolog At2g29330 (Arabidopsis thaliana (Mouse-ear cress)).